Consider the following 82-residue polypeptide: MKKVLALVVAAAMGLSSAAFAAETATPAKTAAPAKTTQTTQHHKKQHKKTVEQKAQAAKKHQKKGGKAPAKTTSKPTTQPAA.

The first 21 residues, 1-21 (MKKVLALVVAAAMGLSSAAFA), serve as a signal peptide directing secretion. The segment covering 22-40 (AETATPAKTAAPAKTTQTT) has biased composition (low complexity). Residues 22–56 (AETATPAKTAAPAKTTQTTQHHKKQHKKTVEQKAQ) constitute a propeptide that is removed on maturation. The tract at residues 22-82 (AETATPAKTA…TSKPTTQPAA (61 aa)) is disordered. Residues 57–66 (AAKKHQKKGG) are compositionally biased toward basic residues. Low complexity predominate over residues 67 to 82 (KAPAKTTSKPTTQPAA).

This sequence belongs to the Asr family. Post-translationally, proteolytic processing gives rise to the active protein.

The protein resides in the periplasm. Functionally, required for growth and/or survival at acidic conditions. The protein is Acid shock protein (asr) of Salmonella typhimurium (strain LT2 / SGSC1412 / ATCC 700720).